A 220-amino-acid polypeptide reads, in one-letter code: Ribonuclease HII (220 aa).

An RNase H type-2 domain is found at Pro16–Gln216. 3 residues coordinate a divalent metal cation: Asp22, Glu23, and Asp114.

Belongs to the RNase HII family. The cofactor is Mn(2+). Mg(2+) serves as cofactor.

It is found in the cytoplasm. The catalysed reaction is Endonucleolytic cleavage to 5'-phosphomonoester.. Its function is as follows. Endonuclease that specifically degrades the RNA of RNA-DNA hybrids. This Nitratidesulfovibrio vulgaris (strain ATCC 29579 / DSM 644 / CCUG 34227 / NCIMB 8303 / VKM B-1760 / Hildenborough) (Desulfovibrio vulgaris) protein is Ribonuclease HII.